The primary structure comprises 186 residues: Peptidyl-tRNA hydrolase (186 aa).

The Proton acceptor role is filled by His-19. TRNA contacts are provided by Phe-64, Asn-66, and Asn-112.

It belongs to the PTH family. As to quaternary structure, monomer.

Its subcellular location is the cytoplasm. It catalyses the reaction an N-acyl-L-alpha-aminoacyl-tRNA + H2O = an N-acyl-L-amino acid + a tRNA + H(+). Hydrolyzes ribosome-free peptidyl-tRNAs (with 1 or more amino acids incorporated), which drop off the ribosome during protein synthesis, or as a result of ribosome stalling. Its function is as follows. Catalyzes the release of premature peptidyl moieties from peptidyl-tRNA molecules trapped in stalled 50S ribosomal subunits, and thus maintains levels of free tRNAs and 50S ribosomes. In Pelagibacter ubique (strain HTCC1062), this protein is Peptidyl-tRNA hydrolase.